Reading from the N-terminus, the 372-residue chain is N-methyl-L-tryptophan oxidase (372 aa).

4-34 is an FAD binding site; sequence DLIIIGSGSVGAAAGYYATRAGLNVLMTDAH. Cysteine 308 is modified (S-8alpha-FAD cysteine).

It belongs to the MSOX/MTOX family. MTOX subfamily. As to quaternary structure, monomer. It depends on FAD as a cofactor.

It carries out the reaction N(alpha)-methyl-L-tryptophan + O2 + H2O = L-tryptophan + formaldehyde + H2O2. Functionally, catalyzes the oxidative demethylation of N-methyl-L-tryptophan. In Shigella flexneri serotype 5b (strain 8401), this protein is N-methyl-L-tryptophan oxidase.